Reading from the N-terminus, the 143-residue chain is MNWAAAVCWALLLAATFLCDGSAAKGGRGGARGSARGGRGAARVRVRPAPRYAGSSMRVAAGAAAGAAAGAAAGLAAGSSWRRAAGPAELGPEDAEDGAPGSNGTGRGVYSYWAWTSGTGPTGHRHLCPLLGGALGALRLLRP.

An N-terminal signal peptide occupies residues 1 to 24; sequence MNWAAAVCWALLLAATFLCDGSAA. N103 is a glycosylation site (N-linked (GlcNAc...) asparagine). S117 is lipidated: GPI-anchor amidated serine. Positions 118–143 are cleaved as a propeptide — removed in mature form; it reads GTGPTGHRHLCPLLGGALGALRLLRP.

Belongs to the SPRN family. Post-translationally, N-glycosylated. In terms of tissue distribution, mainly expressed in brain.

The protein resides in the cell membrane. Prion-like protein that has PrP(C)-like neuroprotective activity. May act as a modulator for the biological actions of normal and abnormal PrP. In Bos taurus (Bovine), this protein is Shadow of prion protein (SPRN).